A 161-amino-acid polypeptide reads, in one-letter code: Lipoprotein LpqH (161 aa).

Positions 1–21 (MNRQLRFAVAGPEILAAVVSG) are cleaved as a signal peptide. Residues 21–46 (GCSSGNKSAPSSSASSSSTSPSASSG) show a composition bias toward low complexity. Residues 21–49 (GCSSGNKSAPSSSASSSSTSPSASSGGAA) are disordered. Cysteine 22 carries N-palmitoyl cysteine lipidation. Cysteine 22 is lipidated: S-diacylglycerol cysteine.

The protein belongs to the mycobacterial 19 kDa antigen family. Post-translationally, modified by Lgt on Cys-22 with an S-linked diacylglycerol with a mixture of C16, C18 and C19 fatty acids, signal peptide is removed by LspA, modifed by Lnt with an amide-linked mixture of C16 and C19 fatty acids.

The protein resides in the cell membrane. Its function is as follows. Might be involved in ligand transport. A host TLR2 agonist, modifies host gene expression in response to pathogen. The sequence is that of Lipoprotein LpqH (lpqH) from Mycobacterium avium.